Here is a 175-residue protein sequence, read N- to C-terminus: Gamma-crystallin B (175 aa).

Beta/gamma crystallin 'Greek key' domains are found at residues 2–40 and 41–83; these read GKIT…RVDS and GCWM…RLIP. The interval 84–88 is connecting peptide; that stretch reads QHSGT. 2 Beta/gamma crystallin 'Greek key' domains span residues 89–129 and 130–172; these read FRMR…NVLD and GCWV…RRVM.

Belongs to the beta/gamma-crystallin family. In terms of assembly, monomer.

In terms of biological role, crystallins are the dominant structural components of the vertebrate eye lens. In Canis lupus familiaris (Dog), this protein is Gamma-crystallin B (CRYGB).